Here is a 385-residue protein sequence, read N- to C-terminus: Arginine biosynthesis bifunctional protein ArgJ (385 aa).

Substrate is bound by residues threonine 142, lysine 168, threonine 179, glutamate 259, asparagine 380, and threonine 385. The active-site Nucleophile is the threonine 179.

Belongs to the ArgJ family. As to quaternary structure, heterotetramer of two alpha and two beta chains.

It localises to the cytoplasm. It catalyses the reaction N(2)-acetyl-L-ornithine + L-glutamate = N-acetyl-L-glutamate + L-ornithine. It carries out the reaction L-glutamate + acetyl-CoA = N-acetyl-L-glutamate + CoA + H(+). It functions in the pathway amino-acid biosynthesis; L-arginine biosynthesis; L-ornithine and N-acetyl-L-glutamate from L-glutamate and N(2)-acetyl-L-ornithine (cyclic): step 1/1. The protein operates within amino-acid biosynthesis; L-arginine biosynthesis; N(2)-acetyl-L-ornithine from L-glutamate: step 1/4. In terms of biological role, catalyzes two activities which are involved in the cyclic version of arginine biosynthesis: the synthesis of N-acetylglutamate from glutamate and acetyl-CoA as the acetyl donor, and of ornithine by transacetylation between N(2)-acetylornithine and glutamate. This is Arginine biosynthesis bifunctional protein ArgJ from Leptospira interrogans serogroup Icterohaemorrhagiae serovar copenhageni (strain Fiocruz L1-130).